We begin with the raw amino-acid sequence, 766 residues long: Polyribonucleotide nucleotidyltransferase (766 aa).

Mg(2+) is bound by residues aspartate 490 and aspartate 496. Residues 557–616 (PKIDTITIPVDKIKVVIGKGGEQIDKIIAETGVKIDIDDEGLCSIFSSDQSAIDRAKEII) form the KH domain. Positions 626-694 (GEVYEAKVVR…DKGRVDASMR (69 aa)) constitute an S1 motif domain. 2 stretches are compositionally biased toward basic and acidic residues: residues 700-734 (PEGY…DRNN) and 744-766 (FELR…KKPE). The segment at 700 to 766 (PEGYVEPERK…FPELSTKKPE (67 aa)) is disordered.

The protein belongs to the polyribonucleotide nucleotidyltransferase family. Requires Mg(2+) as cofactor.

The protein localises to the cytoplasm. It catalyses the reaction RNA(n+1) + phosphate = RNA(n) + a ribonucleoside 5'-diphosphate. Functionally, involved in mRNA degradation. Catalyzes the phosphorolysis of single-stranded polyribonucleotides processively in the 3'- to 5'-direction. This chain is Polyribonucleotide nucleotidyltransferase, found in Lactococcus lactis subsp. cremoris (strain MG1363).